The sequence spans 279 residues: Tryptophan 2,3-dioxygenase (279 aa).

Substrate contacts are provided by residues 48-52 (FIIQH), Y110, and R114. Residue H237 participates in heme binding. Position 251 (T251) interacts with substrate.

Belongs to the tryptophan 2,3-dioxygenase family. As to quaternary structure, homotetramer. Requires heme as cofactor.

The catalysed reaction is L-tryptophan + O2 = N-formyl-L-kynurenine. It participates in amino-acid degradation; L-tryptophan degradation via kynurenine pathway; L-kynurenine from L-tryptophan: step 1/2. Functionally, heme-dependent dioxygenase that catalyzes the oxidative cleavage of the L-tryptophan (L-Trp) pyrrole ring and converts L-tryptophan to N-formyl-L-kynurenine. Catalyzes the oxidative cleavage of the indole moiety. The polypeptide is Tryptophan 2,3-dioxygenase (Bradyrhizobium sp. (strain BTAi1 / ATCC BAA-1182)).